The chain runs to 764 residues: Protein translocase subunit SecA 2 (764 aa).

ATP contacts are provided by residues Q83, 101–105, and D490; that span reads GEGKT.

It belongs to the SecA family. Monomer and homodimer. Part of the essential Sec protein translocation apparatus which comprises SecA, SecYEG and auxiliary proteins SecDF. Other proteins may also be involved.

The protein localises to the cell membrane. It localises to the cytoplasm. It carries out the reaction ATP + H2O + cellular proteinSide 1 = ADP + phosphate + cellular proteinSide 2.. In terms of biological role, part of the Sec protein translocase complex. Interacts with the SecYEG preprotein conducting channel. Has a central role in coupling the hydrolysis of ATP to the transfer of proteins into and across the cell membrane, serving as an ATP-driven molecular motor driving the stepwise translocation of polypeptide chains across the membrane. This is Protein translocase subunit SecA 2 from Corynebacterium diphtheriae (strain ATCC 700971 / NCTC 13129 / Biotype gravis).